A 397-amino-acid chain; its full sequence is Acetate kinase (397 aa).

Asn7 lines the Mg(2+) pocket. Lys14 is a binding site for ATP. A substrate-binding site is contributed by Arg90. Asp147 (proton donor/acceptor) is an active-site residue. ATP is bound by residues 207 to 211 (HLGNG), 282 to 284 (DFR), and 330 to 334 (GLGEN). Residue Glu383 participates in Mg(2+) binding.

Belongs to the acetokinase family. As to quaternary structure, homodimer. The cofactor is Mg(2+). It depends on Mn(2+) as a cofactor.

The protein localises to the cytoplasm. It carries out the reaction acetate + ATP = acetyl phosphate + ADP. It participates in metabolic intermediate biosynthesis; acetyl-CoA biosynthesis; acetyl-CoA from acetate: step 1/2. Functionally, catalyzes the formation of acetyl phosphate from acetate and ATP. Can also catalyze the reverse reaction. In Clostridium botulinum (strain ATCC 19397 / Type A), this protein is Acetate kinase.